The primary structure comprises 176 residues: Cathelicidin-2 (176 aa).

The first 29 residues, 1–29, serve as a signal peptide directing secretion; sequence METQGASLSLGRWSLWLLLLGLVVPLASA. Gln-30 carries the pyrrolidone carboxylic acid modification. Residues 30–130 constitute a propeptide that is removed on maturation; that stretch reads QALSYREAVL…DINCNELQSV (101 aa). 2 disulfides stabilise this stretch: Cys-85–Cys-96 and Cys-107–Cys-124. The segment at 135-176 is disordered; the sequence is PIRRPPIRPPFNPPFRPPVRPPFRPPFRPPFRPPIGPFPGRR. Over residues 141–176 the composition is skewed to pro residues; that stretch reads IRPPFNPPFRPPVRPPFRPPFRPPFRPPIGPFPGRR. Proline amide is present on Pro-173. Positions 174–176 are cleaved as a propeptide — removed in mature form; it reads GRR.

It belongs to the cathelicidin family. In terms of processing, elastase is responsible for its maturation.

The protein resides in the secreted. Binds to the lipid A moiety of bacterial lipopolysaccharides (LPS), a glycolipid present in the outer membrane of all Gram-negative bacteria. Shows a potent antimicrobial activity against the Gram-negative bacteria E.coli, S.typhimurium and P.aeruginosa. Less active against the Gram-positive bacteria S.aureus, L.monocytogenes and B.subtilis. The polypeptide is Cathelicidin-2 (CATHL2) (Capra hircus (Goat)).